Here is a 159-residue protein sequence, read N- to C-terminus: 2-C-methyl-D-erythritol 2,4-cyclodiphosphate synthase (159 aa).

Residues Asp9 and His11 each contribute to the a divalent metal cation site. Residues 9-11 and 35-36 each bind 4-CDP-2-C-methyl-D-erythritol 2-phosphate; these read DVH and HS. His43 is a binding site for a divalent metal cation. Residues 57–59, 62–66, 133–136, Phe140, and Arg143 each bind 4-CDP-2-C-methyl-D-erythritol 2-phosphate; these read DLG, FPDTD, and TTTE.

This sequence belongs to the IspF family. In terms of assembly, homotrimer. A divalent metal cation is required as a cofactor.

The catalysed reaction is 4-CDP-2-C-methyl-D-erythritol 2-phosphate = 2-C-methyl-D-erythritol 2,4-cyclic diphosphate + CMP. The protein operates within isoprenoid biosynthesis; isopentenyl diphosphate biosynthesis via DXP pathway; isopentenyl diphosphate from 1-deoxy-D-xylulose 5-phosphate: step 4/6. Its function is as follows. Involved in the biosynthesis of isopentenyl diphosphate (IPP) and dimethylallyl diphosphate (DMAPP), two major building blocks of isoprenoid compounds. Catalyzes the conversion of 4-diphosphocytidyl-2-C-methyl-D-erythritol 2-phosphate (CDP-ME2P) to 2-C-methyl-D-erythritol 2,4-cyclodiphosphate (ME-CPP) with a corresponding release of cytidine 5-monophosphate (CMP). This Shouchella clausii (strain KSM-K16) (Alkalihalobacillus clausii) protein is 2-C-methyl-D-erythritol 2,4-cyclodiphosphate synthase.